We begin with the raw amino-acid sequence, 398 residues long: Decaprenyl-phosphate N-acetylglucosaminephosphotransferase (398 aa).

11 helical membrane-spanning segments follow: residues 33–53 (LALV…LVGV), 79–99 (GLAM…LPAL), 105–125 (YSSG…IGLI), 148–168 (VTMG…GTIV), 175–195 (ILLT…VDGL), 198–218 (LAAG…VGLL), 225–245 (VLFY…LGFL), 260–280 (GSML…GPIS), 295–315 (PFLL…LAIV), 347–367 (VLLI…TIFF), and 372–392 (TGAV…IPLL).

Belongs to the glycosyltransferase 4 family. WecA subfamily. Mg(2+) is required as a cofactor. Mn(2+) serves as cofactor.

Its subcellular location is the cell membrane. The catalysed reaction is trans,octa-cis-decaprenyl phosphate + UDP-N-acetyl-alpha-D-glucosamine = N-acetyl-alpha-D-glucosaminyl-1-diphospho-trans,octa-cis-decaprenol + UMP. Its pathway is cell wall biogenesis; cell wall polysaccharide biosynthesis. In terms of biological role, involved in the biosynthesis of the disaccharide D-N-acetylglucosamine-L-rhamnose which plays an important role in the mycobacterial cell wall as a linker connecting arabinogalactan and peptidoglycan via a phosphodiester linkage. Catalyzes the transfer of the N-acetylglucosamine-1-phosphate (GlcNAc-1P) moiety from UDP-GlcNAc onto the carrier lipid decaprenyl phosphate (C50-P), yielding GlcNAc-pyrophosphoryl-decaprenyl (GlcNAc-PP-C50). The sequence is that of Decaprenyl-phosphate N-acetylglucosaminephosphotransferase (wecA) from Mycobacterium leprae (strain TN).